Here is a 371-residue protein sequence, read N- to C-terminus: Glutamate 5-kinase (371 aa).

Lysine 11 contributes to the ATP binding site. Substrate is bound by residues serine 52, aspartate 139, and asparagine 151. ATP contacts are provided by residues 171-172 (TD) and 213-219 (TGGMATK). The PUA domain maps to 278–356 (EGSLTLDEGA…AEIPYILGYE (79 aa)).

It belongs to the glutamate 5-kinase family.

It is found in the cytoplasm. The catalysed reaction is L-glutamate + ATP = L-glutamyl 5-phosphate + ADP. It participates in amino-acid biosynthesis; L-proline biosynthesis; L-glutamate 5-semialdehyde from L-glutamate: step 1/2. Its function is as follows. Catalyzes the transfer of a phosphate group to glutamate to form L-glutamate 5-phosphate. The polypeptide is Glutamate 5-kinase (Synechococcus sp. (strain JA-3-3Ab) (Cyanobacteria bacterium Yellowstone A-Prime)).